A 449-amino-acid polypeptide reads, in one-letter code: NADH-quinone oxidoreductase subunit H (449 aa).

Transmembrane regions (helical) follow at residues 29–49 (ILLKAVAVFAFLLLMTLFAIV), 96–116 (PIFILAPIVSAVPAFLAFAVI), 136–156 (LPVSVLYLLAAASLGVYGLIL), 177–197 (IISYEVAMGLAFVAVFIYAGT), 211–231 (WYIVLVPSFVLYCISMVGETN), 259–279 (FFFLAEYINMVTVSAIATTLF), 298–318 (WVPLIWFVLKLLAFLFFFIWL), 330–350 (FMSFGWKVLIPVGLVWVLAVA), and 365–385 (WLVGFGVVVGILLIVALIDPG). A compositionally biased stretch (basic and acidic residues) spans 393–402 (LEEAEQRKLA). A disordered region spans residues 393-449 (LEEAEQRKLAEAPSLDRIPWPPPPQAAGRGRPAVSAGASANGSSTVIPADPGPRQER). Low complexity predominate over residues 418-436 (AAGRGRPAVSAGASANGSS).

The protein belongs to the complex I subunit 1 family. NDH-1 is composed of 14 different subunits. Subunits NuoA, H, J, K, L, M, N constitute the membrane sector of the complex.

The protein localises to the cell membrane. The catalysed reaction is a quinone + NADH + 5 H(+)(in) = a quinol + NAD(+) + 4 H(+)(out). In terms of biological role, NDH-1 shuttles electrons from NADH, via FMN and iron-sulfur (Fe-S) centers, to quinones in the respiratory chain. The immediate electron acceptor for the enzyme in this species is believed to be ubiquinone. Couples the redox reaction to proton translocation (for every two electrons transferred, four hydrogen ions are translocated across the cytoplasmic membrane), and thus conserves the redox energy in a proton gradient. This subunit may bind ubiquinone. The sequence is that of NADH-quinone oxidoreductase subunit H from Frankia casuarinae (strain DSM 45818 / CECT 9043 / HFP020203 / CcI3).